The following is a 153-amino-acid chain: Large ribosomal subunit protein bL27m (153 aa).

The N-terminal 37 residues, 1–37 (MINQGLFIRVNNFQLLKASLAYKKASNILTFPPIRTS), are a transit peptide targeting the mitochondrion. Residues 34–57 (IRTSTKHGGGSSKNTGDSAGRRLG) are disordered.

It belongs to the bacterial ribosomal protein bL27 family. Component of the mitochondrial large ribosomal subunit (mt-LSU). Mature yeast 74S mitochondrial ribosomes consist of a small (37S) and a large (54S) subunit. The 37S small subunit contains a 15S ribosomal RNA (15S mt-rRNA) and at least 32 different proteins. The 54S large subunit contains a 21S rRNA (21S mt-rRNA) and at least 45 different proteins.

It is found in the mitochondrion. Its function is as follows. Component of the mitochondrial ribosome (mitoribosome), a dedicated translation machinery responsible for the synthesis of mitochondrial genome-encoded proteins, including at least some of the essential transmembrane subunits of the mitochondrial respiratory chain. The mitoribosomes are attached to the mitochondrial inner membrane and translation products are cotranslationally integrated into the membrane. The sequence is that of Large ribosomal subunit protein bL27m (mrp7) from Schizosaccharomyces pombe (strain 972 / ATCC 24843) (Fission yeast).